A 661-amino-acid polypeptide reads, in one-letter code: Transcription factor ccg-8 (661 aa).

A compositionally biased stretch (basic residues) spans 1 to 11; sequence MEHHHHHRHMH. Disordered stretches follow at residues 1 to 69, 107 to 243, 255 to 279, and 354 to 398; these read MEHH…QADN, SASS…LDDP, LKTD…DQNQ, and RTKS…RRTS. Composition is skewed to low complexity over residues 23-43 and 107-140; these read HQQY…QHQQ and SASS…SSNR. The span at 173-187 shows a compositional bias: polar residues; sequence DHSLPSIASLNVGSS. The span at 192–203 shows a compositional bias: pro residues; sequence QPTPTPQPPPKF. Positions 357-366 are enriched in basic and acidic residues; sequence SSSDTRESGQ.

Transcription factor that plays a pivotal role in azole adaptive responses by regulating the drug accumulation in the cells. Affects the transcriptional responses to ketoconazole of many genes, including the target gene (erg11), an azole transporter gene (cdr4), a hexose transporter gene (hxt13), a stress response gene (kts-1), two transcription factor genes (named kts-2 and fsd-1/ndt80). Also regulates phospholipid synthesis that is not involved in azole resistance. This is Transcription factor ccg-8 from Neurospora crassa (strain ATCC 24698 / 74-OR23-1A / CBS 708.71 / DSM 1257 / FGSC 987).